A 95-amino-acid polypeptide reads, in one-letter code: Integration host factor subunit beta (95 aa).

Belongs to the bacterial histone-like protein family. Heterodimer of an alpha and a beta chain.

This protein is one of the two subunits of integration host factor, a specific DNA-binding protein that functions in genetic recombination as well as in transcriptional and translational control. The chain is Integration host factor subunit beta from Shewanella halifaxensis (strain HAW-EB4).